Reading from the N-terminus, the 220-residue chain is Transmembrane emp24 domain-containing protein 1 (220 aa).

The N-terminal stretch at 1-19 (MAWSSSFLFIVLPLAAAVA) is a signal peptide. At 20-187 (VQPQDTELTF…LQDSNLERVN (168 aa)) the chain is on the extracellular side. In terms of domain architecture, GOLD spans 36-118 (QECFYQTTLY…EKLVFFELIF (83 aa)). Residues 138 to 164 (ELLDIKLEDIKESIESVKSRLERSIQM) adopt a coiled-coil conformation. A helical transmembrane segment spans residues 188–208 (FWSAINVGVLVTVAFLQVYML). Residues 209–220 (KSLFDDKRKIRT) are Cytoplasmic-facing. The short motif at 211–212 (LF) is the COPII vesicle coat-binding element. Residues 211 to 220 (LFDDKRKIRT) carry the COPI vesicle coat-binding motif.

It belongs to the EMP24/GP25L family. As to quaternary structure, homodimer in endoplasmic reticulum, endoplasmic reticulum-Golgi intermediate compartment and cis-Golgi network. Interacts with IL1RL1. Interacts with RNF26; this interaction is important to modulate innate immune signaling through the cGAS-STING pathway.

Its subcellular location is the cell membrane. It localises to the endoplasmic reticulum membrane. The protein localises to the golgi apparatus. It is found in the cis-Golgi network membrane. The protein resides in the endoplasmic reticulum-Golgi intermediate compartment membrane. In terms of biological role, potential role in vesicular protein trafficking, mainly in the early secretory pathway. May act as a cargo receptor at the lumenal side for incorporation of secretory cargo molecules into transport vesicles and may be involved in vesicle coat formation at the cytoplasmic side. Plays a positive role in IL-33-mediated IL-8 and IL-6 production by interacting with interleukin-33 receptor IL1RL1. Plays also a role in the modulation of innate immune signaling through the cGAS-STING pathway by interacting with RNF26. The sequence is that of Transmembrane emp24 domain-containing protein 1 (tmed1) from Xenopus tropicalis (Western clawed frog).